The primary structure comprises 201 residues: Large ribosomal subunit protein uL4 (201 aa).

The segment at 45 to 66 is disordered; sequence AQLTRSEVSGGGKKPWRQKGTG.

Belongs to the universal ribosomal protein uL4 family. In terms of assembly, part of the 50S ribosomal subunit.

Functionally, one of the primary rRNA binding proteins, this protein initially binds near the 5'-end of the 23S rRNA. It is important during the early stages of 50S assembly. It makes multiple contacts with different domains of the 23S rRNA in the assembled 50S subunit and ribosome. Forms part of the polypeptide exit tunnel. The chain is Large ribosomal subunit protein uL4 from Aeromonas salmonicida (strain A449).